Reading from the N-terminus, the 159-residue chain is Glucosamine 6-phosphate N-acetyltransferase (159 aa).

At serine 2 the chain carries N-acetylserine. Residues threonine 28, 86–89 (KIIH), and 98–100 (EDI) contribute to the D-glucosamine 6-phosphate site. The 132-residue stretch at 28-159 (TTVGTITPES…NAGVEMQIRK (132 aa)) folds into the N-acetyltransferase domain. Residues 100-102 (IAV) and 108-113 (GQGLGK) contribute to the acetyl-CoA site. D-glucosamine 6-phosphate-binding positions include 129–130 (YK) and aspartate 134. 143–145 (YEK) serves as a coordination point for acetyl-CoA. Arginine 158 contacts D-glucosamine 6-phosphate.

The protein belongs to the acetyltransferase family. GNA1 subfamily. As to quaternary structure, homodimer.

The enzyme catalyses D-glucosamine 6-phosphate + acetyl-CoA = N-acetyl-D-glucosamine 6-phosphate + CoA + H(+). It participates in nucleotide-sugar biosynthesis; UDP-N-acetyl-alpha-D-glucosamine biosynthesis; N-acetyl-alpha-D-glucosamine 1-phosphate from alpha-D-glucosamine 6-phosphate (route I): step 1/2. The chain is Glucosamine 6-phosphate N-acetyltransferase (GNA1) from Saccharomyces cerevisiae (strain ATCC 204508 / S288c) (Baker's yeast).